The chain runs to 392 residues: MAIFRDQAENHVEHDRSIEDRRRHRQLVEKSIKENLGDILSEESIIGETKNKKYKIPIRGIKEYQFIYGANNKGVTTGTGEERRGDRISSDKRKAISNNKAGNQEGKDIYETEITLEELMDYIVEDLDLPNLDRKKYSEIIVESAAKKRGYQKYGVRPRLAKKKTVMCKIARKQGKKRALREIGEEAEIGRFPFREDDLRYYKVKKHPKKESNAVMIFIMDVSGSMDNTKKYLARSFFFVLSRFIRRKYNNVAFEFISHTTTAKNVNEYEFFHKGESGGTYISSGINAAIDLIKEKYNPGVWNIYPFYASDGDNWSEDNEKAMEAVNEISDLSNMFGYIELLPSTYSTTMFYRFKKEISKKNFVSVTVKEKKDLWNAIKYMLSEELQEKNKE.

The disordered stretch occupies residues 75 to 100 (VTTGTGEERRGDRISSDKRKAISNNK). Positions 80–94 (GEERRGDRISSDKRK) are enriched in basic and acidic residues.

It belongs to the UPF0229 family.

In Clostridium perfringens (strain ATCC 13124 / DSM 756 / JCM 1290 / NCIMB 6125 / NCTC 8237 / Type A), this protein is UPF0229 protein CPF_1540.